The primary structure comprises 321 residues: 1D-myo-inositol 2-acetamido-2-deoxy-alpha-D-glucopyranoside deacetylase (321 aa).

3 residues coordinate Zn(2+): histidine 15, aspartate 18, and histidine 150. Residues 280-321 are disordered; sequence PEGERESDLFAGLPPATDGTGAAGAPSATGAANPADAEGGAA. Residues 290–321 are compositionally biased toward low complexity; the sequence is AGLPPATDGTGAAGAPSATGAANPADAEGGAA.

This sequence belongs to the MshB deacetylase family. Zn(2+) serves as cofactor.

The enzyme catalyses 1D-myo-inositol 2-acetamido-2-deoxy-alpha-D-glucopyranoside + H2O = 1D-myo-inositol 2-amino-2-deoxy-alpha-D-glucopyranoside + acetate. In terms of biological role, catalyzes the deacetylation of 1D-myo-inositol 2-acetamido-2-deoxy-alpha-D-glucopyranoside (GlcNAc-Ins) in the mycothiol biosynthesis pathway. The protein is 1D-myo-inositol 2-acetamido-2-deoxy-alpha-D-glucopyranoside deacetylase of Streptomyces griseus subsp. griseus (strain JCM 4626 / CBS 651.72 / NBRC 13350 / KCC S-0626 / ISP 5235).